The sequence spans 341 residues: uncharacterized protein (341 aa).

10 helical membrane-spanning segments follow: residues 10–30 (ALGV…SFLT), 42–62 (PFLI…PWYF), 107–127 (LGFC…LGFT), 129–149 (VASF…LGTI), 155–175 (FTLS…IVVT), 192–212 (ALGN…SVMV), 226–246 (LFFG…LIIL), 263–283 (LIVL…WVIA), 290–310 (LLVT…DILL), and 313–333 (HYLN…FIVV).

Belongs to the TPT transporter family.

The protein resides in the vacuole membrane. It localises to the golgi apparatus membrane. This is an uncharacterized protein from Schizosaccharomyces pombe (strain 972 / ATCC 24843) (Fission yeast).